The chain runs to 163 residues: Choriogonadotropin subunit beta variant 2 (163 aa).

An N-terminal signal peptide occupies residues 1–18; it reads MSKGLLLLLLLSMGGTWA. Disulfide bonds link Cys-27-Cys-75, Cys-41-Cys-90, Cys-44-Cys-128, Cys-52-Cys-106, Cys-56-Cys-108, and Cys-111-Cys-118. 2 N-linked (GlcNAc...) asparagine glycosylation sites follow: Asn-31 and Asn-48. The interval 129–163 is disordered; it reads DDPRFQASSSSKAPPPSLPSPSRLPGPSDTPILPQ. Positions 141-152 are enriched in pro residues; that stretch reads APPPSLPSPSRL.

It belongs to the glycoprotein hormones subunit beta family. Expressed in placenta, testis and pituitary.

The protein resides in the secreted. This Homo sapiens (Human) protein is Choriogonadotropin subunit beta variant 2 (CGB2).